The primary structure comprises 1194 residues: Probable disease resistance protein RPP1 (1194 aa).

The interval 1 to 27 (MGSVMSLGCSKRKATNQDVDSESRKRR) is disordered. Residues 96–260 (WKHDVFPSFH…KISTDVSNML (165 aa)) enclose the TIR domain. 105–110 (HGADVR) provides a ligand contact to NAD(+). The active site involves E171. The NB-ARC domain maps to 280-535 (DMLEQLLRLD…ACLFNGESTT (256 aa)). LRR repeat units follow at residues 623 to 647 (LSNT…HFVR), 658 to 681 (QLAL…GYES), 690 to 713 (PEFL…TKQL), 714 to 737 (RNLK…STAT), 739 to 760 (LEEL…IEKL), 761 to 784 (TSLQ…ENAT), 786 to 807 (LREL…IGTA), 808 to 831 (TNLK…IGDI), 832 to 855 (TDLE…IGNL), 866 to 878 (CSKL…NINL), 879 to 899 (KSLD…PEIS), 900 to 922 (THIS…IMSW), 943 to 965 (FDII…VKRM), and 966 to 991 (SRLR…SLDY). The segment at 1170 to 1194 (RRSSSPDLSPESSRVSSYDHCLRGD) is disordered. Positions 1171–1185 (RSSSPDLSPESSRVS) are enriched in low complexity.

It belongs to the disease resistance TIR-NB-LRR family.

It catalyses the reaction NAD(+) + H2O = ADP-D-ribose + nicotinamide + H(+). Functionally, TIR-NB-LRR receptor-like protein that confers resistance to the pathogen Hyaloperonospora arabidopsis. Probably acts as a NAD(+) hydrolase (NADase): in response to activation, catalyzes cleavage of NAD(+) into ADP-D-ribose (ADPR) and nicotinamide; NAD(+) cleavage triggering a defense system that promotes cell death. This is Probable disease resistance protein RPP1 from Arabidopsis thaliana (Mouse-ear cress).